Consider the following 99-residue polypeptide: Nucleoid-associated protein EbfC (99 aa).

This sequence belongs to the YbaB/EbfC family. Homodimer.

It is found in the cytoplasm. Its subcellular location is the nucleoid. Binds to DNA and alters its conformation. May be involved in regulation of gene expression, nucleoid organization and DNA protection. This chain is Nucleoid-associated protein EbfC, found in Borreliella burgdorferi (strain ZS7) (Borrelia burgdorferi).